The primary structure comprises 657 residues: Putative GreA-associated domains protein (657 aa).

Positions 1–152 (MDTRDLTAYS…EQEGNKEKAT (152 aa)) constitute a GRAD2 domain. The 505-residue stretch at 153 to 657 (EFYKKALYRF…TAGSFGTLWE (505 aa)) folds into the GRAD1 domain.

This Treponema pallidum (strain Nichols) protein is Putative GreA-associated domains protein.